Reading from the N-terminus, the 889-residue chain is Disease resistance protein UNI (889 aa).

Positions asparagine 19–arginine 64 form a coiled coil. The interval glycine 131–proline 152 is disordered. Positions serine 137–valine 440 constitute an NB-ARC domain. Glycine 179–threonine 186 is an ATP binding site. LRR repeat units follow at residues tryptophan 510–cysteine 532, serine 533–tyrosine 555, glutamine 557–leucine 580, valine 581–leucine 603, lysine 604–arginine 625, leucine 626–leucine 652, glutamine 653–leucine 676, methionine 698–threonine 721, and cysteine 825–methionine 848.

Belongs to the disease resistance NB-LRR family. As to quaternary structure, interacts with RPT2A.

In terms of biological role, involved in disease resistance via the salicylic acid (SA) signaling pathway. Involved in shoot architecture development via the cytokinin signaling pathway. The sequence is that of Disease resistance protein UNI from Arabidopsis thaliana (Mouse-ear cress).